The primary structure comprises 154 residues: 6,7-dimethyl-8-ribityllumazine synthase (154 aa).

Residues Phe-22, 57–59 (VCE), and 81–83 (TVI) each bind 5-amino-6-(D-ribitylamino)uracil. A (2S)-2-hydroxy-3-oxobutyl phosphate-binding site is contributed by 86–87 (KT). Catalysis depends on His-89, which acts as the Proton donor. Val-114 contributes to the 5-amino-6-(D-ribitylamino)uracil binding site. Position 128 (Arg-128) interacts with (2S)-2-hydroxy-3-oxobutyl phosphate.

The protein belongs to the DMRL synthase family. As to quaternary structure, forms an icosahedral capsid composed of 60 subunits, arranged as a dodecamer of pentamers.

It catalyses the reaction (2S)-2-hydroxy-3-oxobutyl phosphate + 5-amino-6-(D-ribitylamino)uracil = 6,7-dimethyl-8-(1-D-ribityl)lumazine + phosphate + 2 H2O + H(+). Its pathway is cofactor biosynthesis; riboflavin biosynthesis; riboflavin from 2-hydroxy-3-oxobutyl phosphate and 5-amino-6-(D-ribitylamino)uracil: step 1/2. Functionally, catalyzes the formation of 6,7-dimethyl-8-ribityllumazine by condensation of 5-amino-6-(D-ribitylamino)uracil with 3,4-dihydroxy-2-butanone 4-phosphate. This is the penultimate step in the biosynthesis of riboflavin. This chain is 6,7-dimethyl-8-ribityllumazine synthase, found in Wigglesworthia glossinidia brevipalpis.